A 240-amino-acid chain; its full sequence is Purine nucleoside phosphorylase RP494 (240 aa).

3 residues coordinate Zn(2+): His60, Cys96, and His113.

The protein belongs to the purine nucleoside phosphorylase YfiH/LACC1 family. As to quaternary structure, homodimer. Cu(2+) is required as a cofactor. Zn(2+) serves as cofactor.

It catalyses the reaction adenosine + phosphate = alpha-D-ribose 1-phosphate + adenine. The enzyme catalyses S-methyl-5'-thioadenosine + phosphate = 5-(methylsulfanyl)-alpha-D-ribose 1-phosphate + adenine. The catalysed reaction is inosine + phosphate = alpha-D-ribose 1-phosphate + hypoxanthine. It carries out the reaction adenosine + H2O + H(+) = inosine + NH4(+). Its function is as follows. Purine nucleoside enzyme that catalyzes the phosphorolysis of adenosine and inosine nucleosides, yielding D-ribose 1-phosphate and the respective free bases, adenine and hypoxanthine. Also catalyzes the phosphorolysis of S-methyl-5'-thioadenosine into adenine and S-methyl-5-thio-alpha-D-ribose 1-phosphate. Also has adenosine deaminase activity. This chain is Purine nucleoside phosphorylase RP494, found in Rickettsia prowazekii (strain Madrid E).